A 507-amino-acid polypeptide reads, in one-letter code: MTRYAAPGTEGAIVSYQSRYDHFIGGEYVPPARGQYFENPSPVNGLPFTEIARGTADDVERALDAAHEAAPGWGRTSVTERSDILLKIADRMEANLERLAVAESWENGKPVRETLAADIPLAIDHFRYFAGAVRAQEGSLGEIDDDTVAYHFHEPLGVVAQIIPWNFPILMATWKLAPALAAGNAVVLKPAEQTPASIHYWLSLVADLLPPGVLNVVNGFGVEAGKPLASSPRVAKVAFTGETTTGRLIMQYASENIKPVTLELGGKSPNIFFEDVWARDDDFRDKALEGFTMFALNQGEVCTCPSRALVQRGVYAEFMEAAVARTELIKPGHPLDTDTMIGAQASNDQLEKILSYLDIGRQEGAKVLTGGERIEHDGELKGGYYVQPTIFEGHNRMRIFQEEIFGPVVSVTSFDDFDDAVKTANDTLYGLGAGVWTRDMNTAYRAGRAIQAGRVWTNCYHAYPAHAAFGGYKQSGIGRENHKMMLEHYQQTKNILCSYSPKKLGFF.

219–225 (GFGVEAG) provides a ligand contact to NAD(+). Active-site residues include E263 and C302.

The protein belongs to the aldehyde dehydrogenase family.

The enzyme catalyses an aldehyde + NAD(+) + H2O = a carboxylate + NADH + 2 H(+). The protein is Probable aldehyde dehydrogenase of Streptomyces coelicolor (strain ATCC BAA-471 / A3(2) / M145).